The primary structure comprises 125 residues: Ribosome-binding factor A (125 aa).

The protein belongs to the RbfA family. Monomer. Binds 30S ribosomal subunits, but not 50S ribosomal subunits or 70S ribosomes.

The protein localises to the cytoplasm. Its function is as follows. One of several proteins that assist in the late maturation steps of the functional core of the 30S ribosomal subunit. Associates with free 30S ribosomal subunits (but not with 30S subunits that are part of 70S ribosomes or polysomes). Required for efficient processing of 16S rRNA. May interact with the 5'-terminal helix region of 16S rRNA. The protein is Ribosome-binding factor A of Xylella fastidiosa (strain M23).